Here is a 491-residue protein sequence, read N- to C-terminus: MAPQSGPEARSGGADFVVVANRLPIDMVRRADGTTEFKRSPGGLVTALEPLLRRRHGAWIGWPGVPEDADDPNAATEPIEQDGMTLVPVRLSSEDVAEYYEGFSNATLWPLYHDVIVKPIYHREWWDRYVDVNRRFAEATAHTAAEGATVWVQDYQLQLVPKMLRMLRPDLTIGFFLHIPFPPVELFMQMPWRTEIIEGLLGADLVGFHLPGGAQNFLILARRLIGATTSRGNVGVRSRFGEVQFGFRTVKVGAFPISIDSAELDQHARSRATRQRAKEIRAELGNPRKILLGVDRLDYTKGIDVRLRAFSELLEEGRIDPEDTVLVQLATPSRERVESYVAMREDIERQVGHVNGEFGEVGHPVLHYLHRPIPREDLVAFFVAADVMLVTPLRDGMNLVAKEYVACRHDLGGALVLSEFTGAAAELRQAYLTNPHHIEGVKDAIEAALTQAPEEGRRRMRAMRRQVLAHDVDRWARSFLDALASKEPVEG.

A D-glucose 6-phosphate-binding site is contributed by Arg-22. 42–43 (GG) serves as a coordination point for UDP-alpha-D-glucose. The D-glucose 6-phosphate site is built by Tyr-100 and Asp-154. Positions 296 and 301 each coordinate UDP-alpha-D-glucose. D-glucose 6-phosphate is bound at residue Arg-334. 399-403 (LVAKE) provides a ligand contact to UDP-alpha-D-glucose.

This sequence belongs to the glycosyltransferase 20 family. As to quaternary structure, homotetramer.

It carries out the reaction ADP-alpha-D-glucose + D-glucose 6-phosphate = alpha,alpha-trehalose 6-phosphate + ADP + H(+). It catalyses the reaction CDP-alpha-D-glucose + D-glucose 6-phosphate = alpha,alpha-trehalose 6-phosphate + CDP + H(+). The catalysed reaction is GDP-alpha-D-glucose + D-glucose 6-phosphate = alpha,alpha-trehalose 6-phosphate + GDP + H(+). The enzyme catalyses TDP-alpha-D-glucose + D-glucose 6-phosphate = 5-methyl-UDP + alpha,alpha-trehalose 6-phosphate + H(+). It carries out the reaction D-glucose 6-phosphate + UDP-alpha-D-glucose = alpha,alpha-trehalose 6-phosphate + UDP + H(+). It participates in glycan biosynthesis; trehalose biosynthesis. Probably involved in the osmoprotection via the biosynthesis of trehalose and in the production of glycogen and alpha-glucan via the TreS-Pep2 branch involved in the biosynthesis of maltose-1-phosphate (M1P). Catalyzes the transfer of glucose from UDP-glucose (UDP-Glc) to D-glucose 6-phosphate (Glc-6-P) to form trehalose-6-phosphate. Probably also able to use ADP-Glc, CDP-Glc, GDP-Glc and TDP-Glc as glucosyl donors. This Mycolicibacterium vanbaalenii (strain DSM 7251 / JCM 13017 / BCRC 16820 / KCTC 9966 / NRRL B-24157 / PYR-1) (Mycobacterium vanbaalenii) protein is Trehalose-6-phosphate synthase.